Consider the following 85-residue polypeptide: U4-theraphotoxin-Hhn1f (85 aa).

An N-terminal signal peptide occupies residues 1-22; it reads MKVTLIAILTCAAVLVLHTTAA. A propeptide spanning residues 23 to 48 is cleaved from the precursor; that stretch reads EELEAESQLMEVGMPDTELAAVDEER. The cysteines at positions 71 and 82 are disulfide-linked.

Belongs to the neurotoxin 12 (Hwtx-2) family. 02 (Hwtx-2) subfamily. In terms of tissue distribution, expressed by the venom gland.

It is found in the secreted. In terms of biological role, postsynaptic neurotoxin. The polypeptide is U4-theraphotoxin-Hhn1f (Cyriopagopus hainanus (Chinese bird spider)).